The chain runs to 494 residues: Protein transport protein Sec61 subunit alpha (494 aa).

10 consecutive transmembrane segments (helical) span residues 36–56, 79–99, 122–142, 147–167, 177–197, 249–269, 294–314, 359–379, 426–446, and 450–470; these read LWTS…LYGI, LMEL…LLAG, LLGI…GMYG, LGAG…IIVI, YGIG…SIVW, LLAT…QVEL, MPII…QILY, IVSD…SCAL, AAFG…MGAI, and TGIL…LLAV.

Belongs to the SecY/SEC61-alpha family. In terms of assembly, heterotrimeric complex composed of SEC61-alpha, SEC61-beta and SEC61-gamma.

It is found in the endoplasmic reticulum membrane. Functionally, appears to play a crucial role in the insertion of secretory and membrane polypeptides into the ER. It is required for assembly of membrane and secretory proteins. This Pyrenomonas salina protein is Protein transport protein Sec61 subunit alpha.